Consider the following 234-residue polypeptide: HTH-type transcriptional regulator ArcR (234 aa).

40–129 (VRHYTKGQVI…MAFLCKANDD (90 aa)) contributes to the a nucleoside 3',5'-cyclic phosphate binding site. The region spanning 155–228 (KFAKDRIIKL…HKNWLVSKHL (74 aa)) is the HTH crp-type domain. Positions 188–207 (IQLMSDMAGISRETAGHIIH) form a DNA-binding region, H-T-H motif.

It is found in the cytoplasm. In terms of biological role, positively regulates the expression of the arcABDCR operon under anaerobic conditions, thus playing an essential role in arginine catabolism. May also control the expression of genes encoding proteins which are involved in anaerobic metabolism. Can bind cyclic AMP. The sequence is that of HTH-type transcriptional regulator ArcR (arcR) from Staphylococcus aureus (strain Mu50 / ATCC 700699).